We begin with the raw amino-acid sequence, 346 residues long: Biotin synthase (346 aa).

Positions 38-256 (QQVQVSTLLS…IAVARIMMPT (219 aa)) constitute a Radical SAM core domain. 3 residues coordinate [4Fe-4S] cluster: cysteine 53, cysteine 57, and cysteine 60. Cysteine 97, cysteine 128, cysteine 188, and arginine 260 together coordinate [2Fe-2S] cluster.

This sequence belongs to the radical SAM superfamily. Biotin synthase family. As to quaternary structure, homodimer. It depends on [4Fe-4S] cluster as a cofactor. [2Fe-2S] cluster serves as cofactor.

It catalyses the reaction (4R,5S)-dethiobiotin + (sulfur carrier)-SH + 2 reduced [2Fe-2S]-[ferredoxin] + 2 S-adenosyl-L-methionine = (sulfur carrier)-H + biotin + 2 5'-deoxyadenosine + 2 L-methionine + 2 oxidized [2Fe-2S]-[ferredoxin]. The protein operates within cofactor biosynthesis; biotin biosynthesis; biotin from 7,8-diaminononanoate: step 2/2. Its function is as follows. Catalyzes the conversion of dethiobiotin (DTB) to biotin by the insertion of a sulfur atom into dethiobiotin via a radical-based mechanism. The protein is Biotin synthase of Salmonella agona (strain SL483).